A 62-amino-acid polypeptide reads, in one-letter code: Large ribosomal subunit protein bL35 (62 aa).

Residues 1-26 (MPKMKTKSGLKKRIKITATGKVKRGN) are compositionally biased toward basic residues. Positions 1 to 62 (MPKMKTKSGL…SDFKRYKELI (62 aa)) are disordered. Over residues 53-62 (SDFKRYKELI) the composition is skewed to basic and acidic residues.

Belongs to the bacterial ribosomal protein bL35 family.

The protein is Large ribosomal subunit protein bL35 of Metamycoplasma arthritidis (strain 158L3-1) (Mycoplasma arthritidis).